Here is a 1274-residue protein sequence, read N- to C-terminus: VWFA and cache domain-containing protein 1 (1274 aa).

Residues 1–35 (MARQPEEEETAVARARRPPLWLLCLVACWLLGAGA) form the signal peptide. Residues 36 to 1095 (EADFSILDEA…ITLNMIKSAP (1060 aa)) lie on the Extracellular side of the membrane. Asn145 carries an N-linked (GlcNAc...) asparagine glycan. The region spanning 228-443 (HIVVILDHGA…TTVGRFYTNL (216 aa)) is the VWFA domain. 2 Cache domains span residues 453–532 (FSLP…SEPP) and 772–853 (LTGP…HPTL). Residues 1096-1116 (VGPVAGGIMGCIMVLVLAVYA) form a helical membrane-spanning segment. Residues 1117–1274 (YRHQIHRRSH…VTVHTVDAEC (158 aa)) lie on the Cytoplasmic side of the membrane. Residues 1179-1227 (PERRRRYWGRSGTESDHGYSTMSPQEDSENPPCNNDPLSAGVDVGNHDE) form a disordered region. A compositionally biased stretch (polar residues) spans 1196–1215 (GYSTMSPQEDSENPPCNNDP).

The protein belongs to the calcium channel subunit alpha-2/delta family.

The protein resides in the membrane. Functionally, may regulate voltage-dependent calcium channels. The protein is VWFA and cache domain-containing protein 1 (CACHD1) of Homo sapiens (Human).